Reading from the N-terminus, the 115-residue chain is uncharacterized protein (115 aa).

Positions 9–30 are disordered; sequence EGLRERGASGKNEQKKKKKEKI.

This is an uncharacterized protein from Saccharomyces cerevisiae (strain ATCC 204508 / S288c) (Baker's yeast).